Consider the following 290-residue polypeptide: MKTKTNQSVKTFGIVGFPLSHSLSPLIHNSIYKDRNINASYLVFETQNLNVEKIQEFRNSGILGLSVTIPHKETAFTLADKADDTSRIMKASNTLLIGPDSTYAYNTDGEGAYHSILEFSPESLKTGKVVILGSGGSARGIAFSLAVSGKIQNLLVCSRNEITAKEICLLVTKNSNVKAEPISQDVLLTRKEEISLVIHTTPLGMKGQSPGPYLPEDFFNSNMTLFDIVYNPLETPLVKTAQKAGAKIIPGSEMLLYQAMKQFELFTGISPNAEDIIKTRERLSKALENR.

Shikimate contacts are provided by residues 22–24 and T68; that span reads SLS. K72 functions as the Proton acceptor in the catalytic mechanism. D84 is an NADP(+) binding site. N93 and D108 together coordinate shikimate. Residues 133–137 and I228 contribute to the NADP(+) site; that span reads GSGGS. Y230 contributes to the shikimate binding site. G251 contributes to the NADP(+) binding site.

The protein belongs to the shikimate dehydrogenase family. In terms of assembly, homodimer.

It catalyses the reaction shikimate + NADP(+) = 3-dehydroshikimate + NADPH + H(+). The protein operates within metabolic intermediate biosynthesis; chorismate biosynthesis; chorismate from D-erythrose 4-phosphate and phosphoenolpyruvate: step 4/7. Involved in the biosynthesis of the chorismate, which leads to the biosynthesis of aromatic amino acids. Catalyzes the reversible NADPH linked reduction of 3-dehydroshikimate (DHSA) to yield shikimate (SA). The chain is Shikimate dehydrogenase (NADP(+)) from Leptospira interrogans serogroup Icterohaemorrhagiae serovar Lai (strain 56601).